A 124-amino-acid chain; its full sequence is UPF0102 protein BL0935 (124 aa).

It belongs to the UPF0102 family.

This Bifidobacterium longum (strain NCC 2705) protein is UPF0102 protein BL0935.